The primary structure comprises 131 residues: MKLGAFYKGGDLKKPSGGKKRRVRRTKKKALGGGPPQIPKLGENDVRVVERVRGGNIKVRMREARFANVYVPKEKRYVKARIVSIVSTPANPDYARRNFIVKGAVIQTEVGKAVVTSRPGQDGVINAVLIE.

The tract at residues 1–37 is disordered; it reads MKLGAFYKGGDLKKPSGGKKRRVRRTKKKALGGGPPQ. A compositionally biased stretch (basic residues) spans 16 to 30; the sequence is SGGKKRRVRRTKKKA.

The protein belongs to the eukaryotic ribosomal protein eS8 family. In terms of assembly, part of the 30S ribosomal subunit.

The sequence is that of Small ribosomal subunit protein eS8 from Pyrobaculum neutrophilum (strain DSM 2338 / JCM 9278 / NBRC 100436 / V24Sta) (Thermoproteus neutrophilus).